A 319-amino-acid polypeptide reads, in one-letter code: Acetyl esterase (319 aa).

An Involved in the stabilization of the negatively charged intermediate by the formation of the oxyanion hole motif is present at residues 91–93 (HGG). Catalysis depends on residues Ser165, Asp262, and His292.

It belongs to the 'GDXG' lipolytic enzyme family. Homodimer. Interacts with MalT and MelA.

The protein localises to the cytoplasm. In terms of biological role, displays esterase activity towards short chain fatty esters (acyl chain length of up to 8 carbons). Able to hydrolyze triacetylglycerol (triacetin) and tributyrylglycerol (tributyrin), but not trioleylglycerol (triolein) or cholesterol oleate. Negatively regulates MalT activity by antagonizing maltotriose binding. Inhibits MelA galactosidase activity. The protein is Acetyl esterase of Escherichia coli O6:H1 (strain CFT073 / ATCC 700928 / UPEC).